The following is a 323-amino-acid chain: DNA-directed RNA polymerase subunit alpha (323 aa).

Positions 1–225 are alpha N-terminal domain (alpha-NTD); it reads MLDIAMPKIE…QYSQTIADFN (225 aa). The tract at residues 246-323 is alpha C-terminal domain (alpha-CTD); that stretch reads IYDTPIEELD…SHAARAEIEG (78 aa).

This sequence belongs to the RNA polymerase alpha chain family. In terms of assembly, homodimer. The RNAP catalytic core consists of 2 alpha, 1 beta, 1 beta' and 1 omega subunit. When a sigma factor is associated with the core the holoenzyme is formed, which can initiate transcription.

It catalyses the reaction RNA(n) + a ribonucleoside 5'-triphosphate = RNA(n+1) + diphosphate. Its function is as follows. DNA-dependent RNA polymerase catalyzes the transcription of DNA into RNA using the four ribonucleoside triphosphates as substrates. The polypeptide is DNA-directed RNA polymerase subunit alpha (Roseiflexus sp. (strain RS-1)).